The chain runs to 290 residues: Syntaxin-1A (290 aa).

The disordered stretch occupies residues 1-21 (MTKDRLAALQAAQSDDEDMPE). Topologically, residues 1 to 267 (MTKDRLAALQ…KYQSKARRKK (267 aa)) are cytoplasmic. Positions 194 to 256 (LADIEARHAD…QTATQDTKKA (63 aa)) constitute a t-SNARE coiled-coil homology domain. A helical; Anchor for type IV membrane protein transmembrane segment spans residues 268 to 289 (IWIAICVLIAIIILVVFLAIYL). A topological domain (vesicular) is located at residue T290.

It belongs to the syntaxin family. (Microbial infection) Targeted and hydrolyzed by the light chain (LC) of P.bifermentans PMP1. Cleavage probably inhibits neurotransmitter release.

It is found in the cytoplasmic vesicle. Its subcellular location is the secretory vesicle. It localises to the synaptic vesicle membrane. Its function is as follows. Plays a critical role in several secretory processes. The polypeptide is Syntaxin-1A (Anopheles gambiae (African malaria mosquito)).